Reading from the N-terminus, the 666-residue chain is DNA mismatch repair protein MutL (666 aa).

It belongs to the DNA mismatch repair MutL/HexB family.

Its function is as follows. This protein is involved in the repair of mismatches in DNA. It is required for dam-dependent methyl-directed DNA mismatch repair. May act as a 'molecular matchmaker', a protein that promotes the formation of a stable complex between two or more DNA-binding proteins in an ATP-dependent manner without itself being part of a final effector complex. In Clostridium botulinum (strain ATCC 19397 / Type A), this protein is DNA mismatch repair protein MutL.